A 79-amino-acid chain; its full sequence is Conotoxin ArMSGL-021 (79 aa).

Residues 1–20 (MSRLGIMVLTLLLLVFIVTS) form the signal peptide. The propeptide occupies 21-44 (HQDAGEKQATHRGAINFRWRRSLI). Intrachain disulfides connect Cys-52/Cys-64, Cys-56/Cys-73, and Cys-63/Cys-77. At Leu-78 the chain carries Leucine amide.

It belongs to the conotoxin O3 superfamily. Expressed by the venom duct.

It is found in the secreted. This chain is Conotoxin ArMSGL-021, found in Conus arenatus (Sand-dusted cone).